Consider the following 706-residue polypeptide: Signal transducer and activator of transcription 1 (706 aa).

Residues 477–574 (WCIGFISKND…EEMLRFFESE (98 aa)) enclose the SH2 domain.

This sequence belongs to the transcription factor STAT family. As to quaternary structure, forms a homodimer or a heterodimer with a related family member. In terms of tissue distribution, expressed in adult and larval pharynx, head ganglia, tail ganglia, ventral nerve cord and body muscles.

The protein resides in the cytoplasm. It is found in the nucleus. Carries out a dual function: signal transduction and activation of transcription. Activated STAT proteins play a role in repression of dauer formation. Neuronal expression is held in check by negative signals through the TGF-beta pathway that target the daf-3 transcription factor. The polypeptide is Signal transducer and activator of transcription 1 (Caenorhabditis elegans).